A 146-amino-acid chain; its full sequence is Transcriptional regulator MraZ (146 aa).

2 consecutive SpoVT-AbrB domains span residues 9 to 55 (TSAL…PRPV) and 81 to 124 (AMDV…DAQR).

It belongs to the MraZ family. As to quaternary structure, forms oligomers.

It is found in the cytoplasm. The protein localises to the nucleoid. This Leptothrix cholodnii (strain ATCC 51168 / LMG 8142 / SP-6) (Leptothrix discophora (strain SP-6)) protein is Transcriptional regulator MraZ.